The following is a 173-amino-acid chain: Crossover junction endodeoxyribonuclease RuvC (173 aa).

Residues Asp-8, Glu-67, and Asp-139 contribute to the active site. Positions 8, 67, and 139 each coordinate Mg(2+).

Belongs to the RuvC family. As to quaternary structure, homodimer which binds Holliday junction (HJ) DNA. The HJ becomes 2-fold symmetrical on binding to RuvC with unstacked arms; it has a different conformation from HJ DNA in complex with RuvA. In the full resolvosome a probable DNA-RuvA(4)-RuvB(12)-RuvC(2) complex forms which resolves the HJ. It depends on Mg(2+) as a cofactor.

Its subcellular location is the cytoplasm. It catalyses the reaction Endonucleolytic cleavage at a junction such as a reciprocal single-stranded crossover between two homologous DNA duplexes (Holliday junction).. Functionally, the RuvA-RuvB-RuvC complex processes Holliday junction (HJ) DNA during genetic recombination and DNA repair. Endonuclease that resolves HJ intermediates. Cleaves cruciform DNA by making single-stranded nicks across the HJ at symmetrical positions within the homologous arms, yielding a 5'-phosphate and a 3'-hydroxyl group; requires a central core of homology in the junction. The consensus cleavage sequence is 5'-(A/T)TT(C/G)-3'. Cleavage occurs on the 3'-side of the TT dinucleotide at the point of strand exchange. HJ branch migration catalyzed by RuvA-RuvB allows RuvC to scan DNA until it finds its consensus sequence, where it cleaves and resolves the cruciform DNA. In Salmonella dublin (strain CT_02021853), this protein is Crossover junction endodeoxyribonuclease RuvC.